The primary structure comprises 227 residues: Protein MobD (227 aa).

The chain is Protein MobD (mobD) from Acidithiobacillus ferrooxidans (Thiobacillus ferrooxidans).